The following is a 631-amino-acid chain: Sperm-associated antigen 16 protein (631 aa).

A coiled-coil region spans residues 152–267 (DVYTQIMLLE…LQETLKKLQR (116 aa)). A disordered region spans residues 266–332 (QRGHSYHGPQ…QPNPNLNVSK (67 aa)). Basic and acidic residues-rich tracts occupy residues 277 to 287 (KVDHSREKENA) and 295 to 304 (GLREAREQNK). WD repeat units follow at residues 350–389 (LHELPVSCVSMQPHKDILVSCGEDRLWKVLGLPKCNVLLT), 392–431 (GHTDWLSDCCFHPSGDKLATSSGDTTVKLWDLCKGDCILT), 434–473 (GHSRAVWSCTWHSCGNFVASSSLDKTSKIWDVNSERCRCT), 476–515 (GHTDSVNSIEFFPFSNTLLTSSADKTLSIWDARTGICEQS), 518–557 (GHMHSINDAIFDPRGHMIASCDACGVTKLWDFRKLLPIVS), 560–600 (IGPS…HKLM), and 601–630 (GHENEAHTVVFSHDGEILFSGGSDGTVRTW).

As to quaternary structure, interacts with SPAG6 and STK36. Post-translationally, phosphorylated by TSSK2. As to expression, isoform 1 is detected in testis. Isoform 4 is detected in testis and brain, and at lower levels in kidney, heart, pancreas, thyroid, ovary, adrenal gland, spinal cord, trachea and liver.

It is found in the cytoplasm. Its subcellular location is the cytoskeleton. It localises to the flagellum axoneme. The protein localises to the cilium axoneme. The protein resides in the cell projection. It is found in the cilium. Its subcellular location is the flagellum. Its function is as follows. Necessary for sperm flagellar function. Plays a role in motile ciliogenesis. May help to recruit STK36 to the cilium or apical surface of the cell to initiate subsequent steps of construction of the central pair apparatus of motile cilia. The sequence is that of Sperm-associated antigen 16 protein (SPAG16) from Homo sapiens (Human).